The sequence spans 221 residues: Serine/arginine-rich splicing factor 9 (221 aa).

RRM domains follow at residues 14 to 89 and 111 to 187; these read GRIY…FPRA and FRVL…PERG. Lys36 is covalently cross-linked (Glycyl lysine isopeptide (Lys-Gly) (interchain with G-Cter in SUMO2)). Low complexity predominate over residues 187 to 198; it reads GTSYGCSRSRSG. Residues 187–221 form a disordered region; the sequence is GTSYGCSRSRSGSRGRDSPYQSRGSPHYFSPFRPY. The interval 188 to 200 is interaction with SAFB1; sequence TSYGCSRSRSGSR. Residues Ser189, Ser193, Ser195, Ser204, Ser208, and Ser211 each carry the phosphoserine modification. Tyr214 bears the Phosphotyrosine mark. Ser216 is subject to Phosphoserine.

This sequence belongs to the splicing factor SR family. Interacts with KHDRBS3. Interacts with HABP4. Interacts with NOL3/ARC/NOP30. Interacts with NSEP1/YB-1/YB1. Interacts with SAFB/SAFB1. Interacts with SRSF6/SFRS6. Interacts with TRA2B/SFRS10. Interacts with C1QBP. May also interact with DUSP11/PIR1. Extensively phosphorylated on serine residues in the RS domain.

It localises to the nucleus. In terms of biological role, plays a role in constitutive splicing and can modulate the selection of alternative splice sites. Represses the splicing of MAPT/Tau exon 10. The polypeptide is Serine/arginine-rich splicing factor 9 (Srsf9) (Rattus norvegicus (Rat)).